A 62-amino-acid chain; its full sequence is UPF0434 protein R03186 (62 aa).

It belongs to the UPF0434 family.

In Rhizobium meliloti (strain 1021) (Ensifer meliloti), this protein is UPF0434 protein R03186.